Consider the following 225-residue polypeptide: Endonuclease V (225 aa).

Residues Asp43 and Asp110 each contribute to the Mg(2+) site.

The protein belongs to the endonuclease V family. Mg(2+) serves as cofactor.

The protein resides in the cytoplasm. It catalyses the reaction Endonucleolytic cleavage at apurinic or apyrimidinic sites to products with a 5'-phosphate.. DNA repair enzyme involved in the repair of deaminated bases. Selectively cleaves double-stranded DNA at the second phosphodiester bond 3' to a deoxyinosine leaving behind the intact lesion on the nicked DNA. The sequence is that of Endonuclease V from Thermotoga petrophila (strain ATCC BAA-488 / DSM 13995 / JCM 10881 / RKU-1).